The chain runs to 223 residues: Cytotoxic T-lymphocyte protein 4 (223 aa).

A signal peptide spans 1 to 35 (MACSGFQSHGAWLELTSRTWPCTALFSLLFIPVFS). The Extracellular portion of the chain corresponds to 38 to 161 (MHVAQPAVVL…IDPEPCPDSD (124 aa)). The Ig-like V-type domain occupies 39 to 140 (HVAQPAVVLA…VELLYPPPYY (102 aa)). The segment at 46-50 (VLANS) is homodimerization. Intrachain disulfides connect Cys-58-Cys-129 and Cys-85-Cys-103. N-linked (GlcNAc...) asparagine glycosylation is present at Asn-113. An important for interaction with CD80 and CD86 region spans residues 134–139 (LYPPPY). Asn-145 carries N-linked (GlcNAc...) asparagine glycosylation. The homodimerization stretch occupies residues 150–155 (YVIDPE). Residues 162-182 (FLLWILAAVSSGLFFYSFLIT) traverse the membrane as a helical segment. Topologically, residues 183–223 (AVSLSKMLKKRSPLTTGVYVKMPPTEPECEKQFQPYFIPIN) are cytoplasmic. At Tyr-201 the chain carries Phosphotyrosine; by TXK and JAK2.

As to quaternary structure, homodimer; disulfide-linked. Binds to CD80/B7-1 and CD86/B7.2. Interacts with ICOSLG. In terms of processing, N-glycosylation is important for dimerization. Phosphorylation at Tyr-201 prevents binding to the AP-2 adapter complex, blocks endocytosis, and leads to retention of CTLA4 on the cell surface.

The protein resides in the cell membrane. Functionally, inhibitory receptor acting as a major negative regulator of T-cell responses. The affinity of CTLA4 for its natural B7 family ligands, CD80 and CD86, is considerably stronger than the affinity of their cognate stimulatory coreceptor CD28. The chain is Cytotoxic T-lymphocyte protein 4 (CTLA4) from Sus scrofa (Pig).